Reading from the N-terminus, the 249-residue chain is Uridylate kinase (249 aa).

Residue 21–24 (KLSG) coordinates ATP. Position 63 (glycine 63) interacts with UMP. 2 residues coordinate ATP: glycine 64 and arginine 68. Residues aspartate 84 and 145–152 (TGNPFVTT) contribute to the UMP site. The ATP site is built by threonine 172, tyrosine 178, and aspartate 181.

Belongs to the UMP kinase family. Homohexamer.

The protein localises to the cytoplasm. It carries out the reaction UMP + ATP = UDP + ADP. The protein operates within pyrimidine metabolism; CTP biosynthesis via de novo pathway; UDP from UMP (UMPK route): step 1/1. Its activity is regulated as follows. Inhibited by UTP. Catalyzes the reversible phosphorylation of UMP to UDP. In Francisella tularensis subsp. tularensis (strain FSC 198), this protein is Uridylate kinase.